A 507-amino-acid chain; its full sequence is Lysine--tRNA ligase (507 aa).

Mg(2+)-binding residues include Glu406 and Glu413.

Belongs to the class-II aminoacyl-tRNA synthetase family. As to quaternary structure, homodimer. Requires Mg(2+) as cofactor.

The protein localises to the cytoplasm. It catalyses the reaction tRNA(Lys) + L-lysine + ATP = L-lysyl-tRNA(Lys) + AMP + diphosphate. The chain is Lysine--tRNA ligase from Wolinella succinogenes (strain ATCC 29543 / DSM 1740 / CCUG 13145 / JCM 31913 / LMG 7466 / NCTC 11488 / FDC 602W) (Vibrio succinogenes).